A 412-amino-acid chain; its full sequence is NADH-quinone oxidoreductase subunit D (412 aa).

It belongs to the complex I 49 kDa subunit family. NDH-1 is composed of 14 different subunits. Subunits NuoB, C, D, E, F, and G constitute the peripheral sector of the complex.

The protein localises to the cell inner membrane. It catalyses the reaction a quinone + NADH + 5 H(+)(in) = a quinol + NAD(+) + 4 H(+)(out). Functionally, NDH-1 shuttles electrons from NADH, via FMN and iron-sulfur (Fe-S) centers, to quinones in the respiratory chain. The immediate electron acceptor for the enzyme in this species is believed to be a menaquinone. Couples the redox reaction to proton translocation (for every two electrons transferred, four hydrogen ions are translocated across the cytoplasmic membrane), and thus conserves the redox energy in a proton gradient. The protein is NADH-quinone oxidoreductase subunit D of Flavobacterium johnsoniae (strain ATCC 17061 / DSM 2064 / JCM 8514 / BCRC 14874 / CCUG 350202 / NBRC 14942 / NCIMB 11054 / UW101) (Cytophaga johnsonae).